A 592-amino-acid polypeptide reads, in one-letter code: V-type ATP synthase alpha chain (592 aa).

232–239 provides a ligand contact to ATP; it reads GPFGAGKT.

Belongs to the ATPase alpha/beta chains family.

The enzyme catalyses ATP + H2O + 4 H(+)(in) = ADP + phosphate + 5 H(+)(out). Functionally, produces ATP from ADP in the presence of a proton gradient across the membrane. The V-type alpha chain is a catalytic subunit. This Clostridium botulinum (strain Alaska E43 / Type E3) protein is V-type ATP synthase alpha chain.